Reading from the N-terminus, the 122-residue chain is MKIILFLTLIALATCELYHYQECVRGTTVLLKEPCPSGTYEGNSPFHPLADNKFALTCSSTHFAFACADGTRHTYQLRARSVSPKLFIRQEEVYQELYSPLFLIVAALVFIILCFTIKRKTE.

The signal sequence occupies residues 1–15; the sequence is MKIILFLTLIALATC. The X4e domain occupies 16-81; it reads ELYHYQECVR…RHTYQLRARS (66 aa). The Virion surface segment spans residues 16-96; it reads ELYHYQECVR…FIRQEEVYQE (81 aa). Cystine bridges form between Cys-23–Cys-58 and Cys-35–Cys-67. A helical membrane pass occupies residues 97-117; that stretch reads LYSPLFLIVAALVFIILCFTI. The Intravirion portion of the chain corresponds to 118-122; that stretch reads KRKTE. The Di-lysine motif motif lies at 118–122; it reads KRKTE.

Interacts with the spike glycoprotein, M protein, E protein and the accessory protein 3.

The protein localises to the virion. It localises to the host endoplasmic reticulum membrane. The protein resides in the host endoplasmic reticulum-Golgi intermediate compartment membrane. Its subcellular location is the host Golgi apparatus membrane. Its function is as follows. Non-structural protein which is dispensable for virus replication in cell culture. This Bat coronavirus HKU3 (BtCoV) protein is Protein 7a.